The primary structure comprises 275 residues: Rhamnulose-1-phosphate aldolase (275 aa).

Glu-117 is an active-site residue. Zn(2+) contacts are provided by His-141, His-143, and His-212.

It belongs to the aldolase class II family. RhaD subfamily. Homotetramer. Zn(2+) serves as cofactor.

The protein resides in the cytoplasm. The enzyme catalyses L-rhamnulose 1-phosphate = (S)-lactaldehyde + dihydroxyacetone phosphate. It participates in carbohydrate degradation; L-rhamnose degradation; glycerone phosphate from L-rhamnose: step 3/3. Its function is as follows. Catalyzes the reversible cleavage of L-rhamnulose-1-phosphate to dihydroxyacetone phosphate (DHAP) and L-lactaldehyde. The polypeptide is Rhamnulose-1-phosphate aldolase (Salmonella paratyphi B (strain ATCC BAA-1250 / SPB7)).